The following is a 211-amino-acid chain: PITH domain-containing protein GA19395 (211 aa).

Residues 20-192 (DHALEMGIEY…GVTICNYEAR (173 aa)) form the PITH domain.

It belongs to the PITHD1 family.

The protein is PITH domain-containing protein GA19395 of Drosophila pseudoobscura pseudoobscura (Fruit fly).